The following is a 469-amino-acid chain: 6-phosphofructo-2-kinase/fructose-2,6-bisphosphatase 4 (469 aa).

The interval 1 to 249 (MASPRELTQN…YYLMNIHVTP (249 aa)) is 6-phosphofructo-2-kinase. 46 to 54 (GLPARGKTY) is a binding site for ATP. 2 residues coordinate beta-D-fructose 6-phosphate: Arg79 and Arg103. Asp129 is a catalytic residue. 2 residues coordinate beta-D-fructose 6-phosphate: Thr131 and Arg137. Residue Cys159 is part of the active site. 168 to 173 (NIVQVK) serves as a coordination point for ATP. Beta-D-fructose 6-phosphate contacts are provided by Lys173, Arg194, and Tyr198. The interval 250-469 (RSIYLCRHGE…EALVTVPAHQ (220 aa)) is fructose-2,6-bisphosphatase. Arg256 is a binding site for beta-D-fructose 2,6-bisphosphate. The active-site Tele-phosphohistidine intermediate is His257. Residues Asn263, Gly269, and Arg306 each coordinate beta-D-fructose 2,6-bisphosphate. Glu326 acts as the Proton donor/acceptor in catalysis. 6 residues coordinate beta-D-fructose 2,6-bisphosphate: Tyr337, Arg351, Lys355, Tyr366, Gln392, and Arg396. ATP is bound at residue 348-351 (FALR). ATP is bound by residues 392 to 396 (QAVMR) and Tyr428. At Thr444 the chain carries Phosphothreonine; by PKC.

In the C-terminal section; belongs to the phosphoglycerate mutase family. As to quaternary structure, homodimer.

The enzyme catalyses beta-D-fructose 2,6-bisphosphate + H2O = beta-D-fructose 6-phosphate + phosphate. The catalysed reaction is beta-D-fructose 6-phosphate + ATP = beta-D-fructose 2,6-bisphosphate + ADP + H(+). Its activity is regulated as follows. The most important regulatory mechanism of these opposing activities is by phosphorylation and dephosphorylation of the enzyme. Its function is as follows. Synthesis and degradation of fructose 2,6-bisphosphate. The sequence is that of 6-phosphofructo-2-kinase/fructose-2,6-bisphosphatase 4 (PFKFB4) from Macaca fascicularis (Crab-eating macaque).